Here is a 329-residue protein sequence, read N- to C-terminus: Phosphoenolpyruvate transferase (329 aa).

Aspartate 61 contacts 7,8-didemethyl-8-hydroxy-5-deazariboflavin.

The protein belongs to the CofD family. Homodimer. Requires Mg(2+) as cofactor.

The enzyme catalyses enolpyruvoyl-2-diphospho-5'-guanosine + 7,8-didemethyl-8-hydroxy-5-deazariboflavin = dehydro coenzyme F420-0 + GMP + H(+). The protein operates within cofactor biosynthesis; coenzyme F420 biosynthesis. Its function is as follows. Catalyzes the transfer of the phosphoenolpyruvate moiety from enoylpyruvoyl-2-diphospho-5'-guanosine (EPPG) to 7,8-didemethyl-8-hydroxy-5-deazariboflavin (FO) with the formation of dehydro coenzyme F420-0 and GMP. The polypeptide is Phosphoenolpyruvate transferase (Mycobacterium ulcerans (strain Agy99)).